The chain runs to 186 residues: Peptidyl-tRNA hydrolase (186 aa).

Residue Tyr-14 participates in tRNA binding. His-19 (proton acceptor) is an active-site residue. Phe-64, Asn-66, and Asn-112 together coordinate tRNA.

Belongs to the PTH family. In terms of assembly, monomer.

The protein localises to the cytoplasm. It catalyses the reaction an N-acyl-L-alpha-aminoacyl-tRNA + H2O = an N-acyl-L-amino acid + a tRNA + H(+). In terms of biological role, hydrolyzes ribosome-free peptidyl-tRNAs (with 1 or more amino acids incorporated), which drop off the ribosome during protein synthesis, or as a result of ribosome stalling. Catalyzes the release of premature peptidyl moieties from peptidyl-tRNA molecules trapped in stalled 50S ribosomal subunits, and thus maintains levels of free tRNAs and 50S ribosomes. The protein is Peptidyl-tRNA hydrolase of Anaplasma marginale (strain St. Maries).